The chain runs to 388 residues: Transcription factor TB1 (388 aa).

Residues 115 to 173 (RKDRHSKISTAGGMRDRRMRLSLDVARKFFALQDMLGFDKASKTVQWLLNMSKAAIREI) enclose the TCP domain. 2 disordered regions span residues 180-269 (SVCE…EKNR) and 289-331 (AAGE…VGVS). Residues 187–201 (SSSLSVDGKQQQHSN) are compositionally biased toward polar residues. Basic and acidic residues-rich tracts occupy residues 210 to 224 (GDHK…DGKK) and 247 to 269 (VPDK…EKNR). The 18-residue stretch at 250 to 267 (KESRAKARERARERTKEK) folds into the R domain. The span at 289 to 314 (AAGEDKSPTSPSNNLNHSSSTNLVST) shows a compositional bias: low complexity.

Interacts with MADS57. Expressed in the axillary bud of the first formed leaf node. Expressed in axillary buds, shoot apical meristem, young leaves, vascular tissues and the tips of crown roots.

The protein resides in the nucleus. Probable transcription factor that functions as a negative regulator of lateral branching, presumably through its expression in axillary buds. Involved in the fine tuning of shoot branching. May function as an integrator of multiple signaling pathways to regulate the development of axillary buds. Works partially downstream of strigolactones to inhibit bud outgrowth. Binds to MADS57 to suppress the negative regulation of D14 by MADS57 and balance the expression of D14 for tillering. This Oryza sativa subsp. japonica (Rice) protein is Transcription factor TB1.